A 130-amino-acid polypeptide reads, in one-letter code: MAKRKAVRKKVVKKNIARGICHISASFNNTLVTITDEMGNMIAWSSAGSLGFKGSKKSTPFAAQAAVEDAVAKAQVHGVKELGIKVQGPGSGRETATKAVGGIEGIRVTFMKDVTPLPHNGCRAPKRRRV.

The protein belongs to the universal ribosomal protein uS11 family. As to quaternary structure, part of the 30S ribosomal subunit. Interacts with proteins S7 and S18. Binds to IF-3.

Functionally, located on the platform of the 30S subunit, it bridges several disparate RNA helices of the 16S rRNA. Forms part of the Shine-Dalgarno cleft in the 70S ribosome. In Sulfurimonas denitrificans (strain ATCC 33889 / DSM 1251) (Thiomicrospira denitrificans (strain ATCC 33889 / DSM 1251)), this protein is Small ribosomal subunit protein uS11.